Consider the following 1173-residue polypeptide: MEELSADEIRRRRLARLAGGQTSQPTTPLTSPQRENPPGPPIAASAPGPSQSLGLNVHNMTPATSPIGAAGVAHRSQSSEGVSSLSSSPSNSLETQSQSLSRSQSMDIDGVSCEKSMSQVDVDSGIENMEVDENDRREKRSLSDKEPSSGPEVSEEQALQLVCKIFRVSWKDRDRDVIFLSSLSAQFKQNPKEVFSDFKDLIGQILMEVLMMSTQTRDENPFASLTATSQPIATAARSPDRNLMLNTGSSSGTSPMFCNMGSFSTSSLSSLGASGGASNWDSYSDHFTIETCKETDMLNYLIECFDRVGIEEKKAPKMCSQPAVSQLLSNIRSQCISHTALVLQGSLTQPRSLQQPSFLVPYMLCRNLPYGFIQELVRTTHQDEEVFKQIFIPILQGLALAAKECSLESDYFKYPLMALGELCETKFGKTHPMCNLVASLPLWLPKSLSPGSGRELQRLSYLGAFFSFSVFAEDDAKVVEKYFSGPAITLENTRVVSQSLQHYLELGRQELFKILHSILLNGETREAALSYMAALVNANMKKAQMQADDRLVSTDGFMLNLLWVLQQLSTKIKLETVDPTYIFHPRCRITLPNDETRINATMEDVNERLTELYGDQPPFSEPKFPTECFFLTLHAHHLSILPSCRRYIRRLRAIRELNRTVEDLKNNESQWKDSPLATRHREMLKRCKTQLKKLVRCKACADAGLLDESFLRRCLNFYGLLIQLMLRILDPAYPDVTLPLNSEVPKVFAALPEFYVEDVAEFLFFIVQYSPQVLYEPCTQDIVMFLVVMLCNQNYIRNPYLVAKLVEVMFMTNPSVQPRTQKFFEMIENHPLSTKLLVPSLMKFYTDVEHTGATSEFYDKFTIRYHISTIFKSLWQNIAHHGTFMEEFNSGKQFVRYINMLINDTTFLLDESLESLKRIHEVQEEMKNKEQWDQLPRDQQQARQSQLAQDERVSRSYLALATETVDMFHLLTKQVQKPFLRPELGPRLAAMLNFNLQQLCGPKCRDLKVENPEKYGFEPKKLLDQLTDIYLQLDCARFAKAIADDQRSYSKELFEEVISKMRKAGIKSTIAIEKFKLLAEKVEEIVAKNARAEIDYSDAPDEFRDPLMDTLMTDPVRLPSGTVMDRSIILRHLLNSPTDPFNRQMLTESMLEPVPELKEQIQAWMREKQSSDH.

Methionine 1 carries the N-acetylmethionine modification. The disordered stretch occupies residues 1 to 155; that stretch reads MEELSADEIR…EPSSGPEVSE (155 aa). The segment covering 16 to 33 has biased composition (low complexity); the sequence is RLAGGQTSQPTTPLTSPQ. Residues serine 23 and serine 31 each carry the phosphoserine modification. The span at 51–64 shows a compositional bias: polar residues; sequence QSLGLNVHNMTPAT. A compositionally biased stretch (low complexity) spans 76–99; it reads SQSSEGVSSLSSSPSNSLETQSQS. Residues serine 84, serine 88, serine 90, serine 101, serine 103, serine 105, and serine 124 each carry the phosphoserine modification. A compositionally biased stretch (basic and acidic residues) spans 134 to 147; it reads NDRREKRSLSDKEP. Phosphoserine is present on residues serine 238, serine 674, and serine 840. The segment at 928 to 948 is disordered; sequence NKEQWDQLPRDQQQARQSQLA. The span at 937-948 shows a compositional bias: low complexity; sequence RDQQQARQSQLA. The U-box domain occupies 1098–1171; that stretch reads DAPDEFRDPL…QAWMREKQSS (74 aa). Position 1136 is a phosphoserine (serine 1136).

The protein belongs to the ubiquitin conjugation factor E4 family. As to quaternary structure, interacts with VCP. Interacts with STUB1/CHIP and UNC45B. In terms of processing, proteolytically cleaved by caspases during apoptosis. Cleaved efficiently at Asp-123 by caspase-6 and granzyme B. Cleaved with approximately 10-fold less efficiency at Asp-109 by caspase-3 and caspase-7. Expressed predominantly in neuronal tissues. Also detected in liver, heart, brain, kidney and testis.

The protein localises to the cytoplasm. The protein resides in the nucleus. It catalyses the reaction S-ubiquitinyl-[E2 ubiquitin-conjugating enzyme]-L-cysteine + [acceptor protein]-L-lysine = [E2 ubiquitin-conjugating enzyme]-L-cysteine + N(6)-ubiquitinyl-[acceptor protein]-L-lysine.. The protein operates within protein modification; protein ubiquitination. In terms of biological role, ubiquitin-protein ligase that probably functions as an E3 ligase in conjunction with specific E1 and E2 ligases. May also function as an E4 ligase mediating the assembly of polyubiquitin chains on substrates ubiquitinated by another E3 ubiquitin ligase. May regulate myosin assembly in striated muscles together with STUB1 and VCP/p97 by targeting myosin chaperone UNC45B for proteasomal degradation. This chain is Ubiquitin conjugation factor E4 B, found in Mus musculus (Mouse).